A 277-amino-acid polypeptide reads, in one-letter code: Putative serine/threonine-protein kinase PRKY (277 aa).

Over residues 1–12 the composition is skewed to low complexity; sequence MEAPGPAQAAAA. A disordered region spans residues 1 to 40; it reads MEAPGPAQAAAAESNSREVTEDAADWAPALCPSPEARSPE. The Protein kinase domain maps to 49–277; it reads CDALVTMGTG…DFHVKTGRMM (229 aa). ATP is bound by residues 55 to 63 and K78; that span reads MGTGTFGRV. The active-site Proton acceptor is D172. Residue T203 is modified to Phosphothreonine.

It belongs to the protein kinase superfamily. AGC Ser/Thr protein kinase family. cAMP subfamily. Ubiquitous.

The catalysed reaction is L-seryl-[protein] + ATP = O-phospho-L-seryl-[protein] + ADP + H(+). The enzyme catalyses L-threonyl-[protein] + ATP = O-phospho-L-threonyl-[protein] + ADP + H(+). The chain is Putative serine/threonine-protein kinase PRKY (PRKY) from Homo sapiens (Human).